We begin with the raw amino-acid sequence, 426 residues long: D-tagatose-1,6-bisphosphate aldolase subunit KbaZ (426 aa).

Belongs to the GatZ/KbaZ family. KbaZ subfamily. As to quaternary structure, forms a complex with KbaY.

It functions in the pathway carbohydrate metabolism; D-tagatose 6-phosphate degradation; D-glyceraldehyde 3-phosphate and glycerone phosphate from D-tagatose 6-phosphate: step 2/2. Functionally, component of the tagatose-1,6-bisphosphate aldolase KbaYZ that is required for full activity and stability of the Y subunit. Could have a chaperone-like function for the proper and stable folding of KbaY. When expressed alone, KbaZ does not show any aldolase activity. The sequence is that of D-tagatose-1,6-bisphosphate aldolase subunit KbaZ from Escherichia fergusonii (strain ATCC 35469 / DSM 13698 / CCUG 18766 / IAM 14443 / JCM 21226 / LMG 7866 / NBRC 102419 / NCTC 12128 / CDC 0568-73).